The following is a 175-amino-acid chain: Transcriptional repressor NrdR (175 aa).

A zinc finger spans residues 3-34; it reads CPICQDTNSRVLESRSAESGKSIRRRRECMNC. Residues 49-139 form the ATP-cone domain; sequence ITIIKRDGKK…VYRKFQGIRD (91 aa).

The protein belongs to the NrdR family. It depends on Zn(2+) as a cofactor.

Its function is as follows. Negatively regulates transcription of bacterial ribonucleotide reductase nrd genes and operons by binding to NrdR-boxes. This is Transcriptional repressor NrdR from Trichodesmium erythraeum (strain IMS101).